Consider the following 134-residue polypeptide: UPF0412 protein YaaI (134 aa).

Positions 1 to 23 (MRSVLTISVGLLFGLALSSVAHA) are cleaved as a signal peptide.

It belongs to the UPF0412 family.

The protein is UPF0412 protein YaaI of Salmonella typhimurium (strain LT2 / SGSC1412 / ATCC 700720).